The sequence spans 478 residues: MADRQSLEEALRRIWGYDHFRYPQGEVIDCLLARRDCLVVLPTGGGKSICFQLPALLGEGLTLVVSPLVALMEDQVQSLRRQNLPAACLHSQLSRPERKQVLYQLGQQQLKLLYLSPETLLSEPVWNLLRQPQVKLQGIMLDEAHCLVQWGDSFRPAYRRLGALRRGLGRDKGQIPLAAFTATADRQQQNLIVEGLNLRSPECFQVSPHRPQLHLKVKMVLSEYCRRQQLRRFLLKHLQESGLIYVRTRTMAINLAQWLQERGFDSEAYHGGLGPHQRRQLEQKWLTGQISSVVCTNAFGLGIDKPDTRWVLHYQAPLMLMDYLQEVGRAGRDLQPAECLTLVSEPTGWLDSGDRQLRQYFLSQASKYLQRAEVLSQQIPSQGNLGQLKAHFPDLEMALAWLHRRGNLEWLDPFNYRINPGHYQANPLEELKSQYRLMTQYLTTSRCRWQTILVAFGDNSPAARRPCGTCDNCLVGRC.

One can recognise a Helicase ATP-binding domain in the interval 28 to 202 (IDCLLARRDC…VEGLNLRSPE (175 aa)). An ATP-binding site is contributed by 41 to 48 (LPTGGGKS). The short motif at 142 to 145 (DEAH) is the DEAH box element. The 152-residue stretch at 229-380 (QLRRFLLKHL…RAEVLSQQIP (152 aa)) folds into the Helicase C-terminal domain. Zn(2+) contacts are provided by cysteine 447, cysteine 467, cysteine 470, and cysteine 473.

The protein belongs to the helicase family. RecQ subfamily. Mg(2+) is required as a cofactor. Zn(2+) serves as cofactor.

The enzyme catalyses Couples ATP hydrolysis with the unwinding of duplex DNA by translocating in the 3'-5' direction.. It carries out the reaction ATP + H2O = ADP + phosphate + H(+). Its function is as follows. An ATP-dependent DNA helicase which unwinds DNA in a 3'-5' direction. This chain is ATP-dependent DNA helicase RecQ, found in Synechocystis sp. (strain ATCC 27184 / PCC 6803 / Kazusa).